We begin with the raw amino-acid sequence, 133 residues long: Large ribosomal subunit protein uL15 (133 aa).

The tract at residues 1-64 (MGLENLKPAK…QPLQRRLPKI (64 aa)) is disordered.

The protein belongs to the universal ribosomal protein uL15 family. As to quaternary structure, part of the 50S ribosomal subunit.

Functionally, binds to the 23S rRNA. The chain is Large ribosomal subunit protein uL15 from Helicobacter pylori (strain J99 / ATCC 700824) (Campylobacter pylori J99).